A 299-amino-acid polypeptide reads, in one-letter code: Glutamyl-Q tRNA(Asp) synthetase (299 aa).

L-glutamate is bound by residues arginine 18–serine 22 and glutamate 54. The 'HIGH' region signature appears at proline 21 to serine 31. 4 residues coordinate Zn(2+): cysteine 110, cysteine 112, tyrosine 124, and cysteine 128. The L-glutamate site is built by tyrosine 181 and arginine 199. Positions lysine 237–glutamine 241 match the 'KMSKS' region motif. ATP is bound at residue lysine 240.

This sequence belongs to the class-I aminoacyl-tRNA synthetase family. GluQ subfamily. Zn(2+) serves as cofactor.

In terms of biological role, catalyzes the tRNA-independent activation of glutamate in presence of ATP and the subsequent transfer of glutamate onto a tRNA(Asp). Glutamate is transferred on the 2-amino-5-(4,5-dihydroxy-2-cyclopenten-1-yl) moiety of the queuosine in the wobble position of the QUC anticodon. The protein is Glutamyl-Q tRNA(Asp) synthetase of Shewanella oneidensis (strain ATCC 700550 / JCM 31522 / CIP 106686 / LMG 19005 / NCIMB 14063 / MR-1).